The primary structure comprises 142 residues: Transcriptional regulator MraZ (142 aa).

SpoVT-AbrB domains lie at 5 to 51 (ASAL…PRPE) and 77 to 120 (AADV…DAAT).

Belongs to the MraZ family. Forms oligomers.

The protein resides in the cytoplasm. It localises to the nucleoid. The sequence is that of Transcriptional regulator MraZ from Cupriavidus taiwanensis (strain DSM 17343 / BCRC 17206 / CCUG 44338 / CIP 107171 / LMG 19424 / R1) (Ralstonia taiwanensis (strain LMG 19424)).